Consider the following 142-residue polypeptide: Large ribosomal subunit protein uL13 (142 aa).

Belongs to the universal ribosomal protein uL13 family. As to quaternary structure, part of the 50S ribosomal subunit.

In terms of biological role, this protein is one of the early assembly proteins of the 50S ribosomal subunit, although it is not seen to bind rRNA by itself. It is important during the early stages of 50S assembly. The sequence is that of Large ribosomal subunit protein uL13 from Shewanella baltica (strain OS185).